Consider the following 149-residue polypeptide: Transcriptional repressor NrdR (149 aa).

The segment at 3-34 is a zinc-finger region; sequence CPFCSATDTKVIDSRLVADGHQVRRRRECTEC. An ATP-cone domain is found at 49-139; that stretch reads PRVIKRDGTR…VYRAFEDVSQ (91 aa).

Belongs to the NrdR family. Zn(2+) serves as cofactor.

Negatively regulates transcription of bacterial ribonucleotide reductase nrd genes and operons by binding to NrdR-boxes. The protein is Transcriptional repressor NrdR of Shewanella frigidimarina (strain NCIMB 400).